A 586-amino-acid polypeptide reads, in one-letter code: Dolichyl-diphosphooligosaccharide--protein glycosyltransferase subunit 1 (586 aa).

Positions 1 to 15 (MRLLFAIALLGAVFA) are cleaved as a signal peptide. The Lumenal segment spans residues 16 to 421 (EDAWKAANVD…EFEFVDMLRE (406 aa)). Residues 422–442 (PLLASAFFFSLFFVIIVYSRF) traverse the membrane as a helical segment. The Cytoplasmic portion of the chain corresponds to 443–586 (DFTISSDPAK…NRADSVLASI (144 aa)).

Belongs to the OST1 family. Component of the oligosaccharyltransferase (OST) complex.

It localises to the endoplasmic reticulum membrane. Its subcellular location is the cytoplasmic granule. It participates in protein modification; protein glycosylation. Subunit of the oligosaccharyl transferase (OST) complex that catalyzes the initial transfer of a defined glycan (Glc(3)Man(9)GlcNAc(2) in eukaryotes) from the lipid carrier dolichol-pyrophosphate to an asparagine residue within an Asn-X-Ser/Thr consensus motif in nascent polypeptide chains, the first step in protein N-glycosylation. N-glycosylation occurs cotranslationally and the complex associates with the Sec61 complex at the channel-forming translocon complex that mediates protein translocation across the endoplasmic reticulum (ER). All subunits are required for a maximal enzyme activity. The chain is Dolichyl-diphosphooligosaccharide--protein glycosyltransferase subunit 1 from Caenorhabditis elegans.